Here is a 417-residue protein sequence, read N- to C-terminus: Queuine tRNA-ribosyltransferase accessory subunit 2 (417 aa).

Residues Cys324, Cys326, Cys329, and His355 each coordinate Zn(2+).

It belongs to the queuine tRNA-ribosyltransferase family. QTRT2 subfamily. In terms of assembly, heterodimer of a catalytic subunit and an accessory subunit. Zn(2+) serves as cofactor.

It localises to the cytoplasm. Non-catalytic subunit of the queuine tRNA-ribosyltransferase (TGT) that catalyzes the base-exchange of a guanine (G) residue with queuine (Q) at position 34 (anticodon wobble position) in tRNAs with GU(N) anticodons (tRNA-Asp, -Asn, -His and -Tyr), resulting in the hypermodified nucleoside queuosine (7-(((4,5-cis-dihydroxy-2-cyclopenten-1-yl)amino)methyl)-7-deazaguanosine). This is Queuine tRNA-ribosyltransferase accessory subunit 2 from Drosophila virilis (Fruit fly).